Consider the following 298-residue polypeptide: Junctional adhesion molecule B (298 aa).

The signal sequence occupies residues Met-1–Gly-28. The Extracellular segment spans residues Phe-29 to Asn-236. One can recognise an Ig-like V-type domain in the interval Ser-32–Met-128. 2 disulfide bridges follow: Cys-51–Cys-110 and Cys-156–Cys-214. A glycan (N-linked (GlcNAc...) asparagine) is linked at Asn-99. An Ig-like C2-type domain is found at Pro-135–Ser-238. A helical transmembrane segment spans residues Ile-237–Gly-257. The Cytoplasmic portion of the chain corresponds to Thr-258 to Ile-298.

It belongs to the immunoglobulin superfamily. The expression in Sertoli cells is regulated by TGFB3 through ubiquitin-mediated proteasomal degradation. In terms of tissue distribution, expressed by bone marrow stromal cells (at protein level). Expressed in skin (at protein level). Expressed in testis by Sertoli cells (at protein level). Expressed by dorsal root ganglion and spinal cord neurons.

It is found in the cell membrane. The protein localises to the cell junction. The protein resides in the tight junction. Junctional adhesion protein that mediates heterotypic cell-cell interactions with its cognate receptor JAM3 to regulate different cellular processes. Plays a role in homing and mobilization of hematopoietic stem and progenitor cells within the bone marrow. At the surface of bone marrow stromal cells, it contributes to the retention of the hematopoietic stem and progenitor cells expressing JAM3. Plays a central role in leukocytes extravasation by facilitating not only transmigration but also tethering and rolling of leukocytes along the endothelium. Tethering and rolling of leukocytes are dependent on the binding by JAM2 of the integrin alpha-4/beta-1. Plays a role in spermatogenesis where JAM2 and JAM3, which are respectively expressed by Sertoli and germ cells, mediate an interaction between both cell types and play an essential role in the anchorage of germ cells onto Sertoli cells and the assembly of cell polarity complexes during spermatid differentiation. Also functions as an inhibitory somatodendritic cue that prevents the myelination of non-axonal parts of neurons. During myogenesis, it is involved in myocyte fusion. May also play a role in angiogenesis. This chain is Junctional adhesion molecule B, found in Mus musculus (Mouse).